Consider the following 213-residue polypeptide: ATP phosphoribosyltransferase (213 aa).

This sequence belongs to the ATP phosphoribosyltransferase family. Short subfamily. Heteromultimer composed of HisG and HisZ subunits.

The protein resides in the cytoplasm. It catalyses the reaction 1-(5-phospho-beta-D-ribosyl)-ATP + diphosphate = 5-phospho-alpha-D-ribose 1-diphosphate + ATP. It participates in amino-acid biosynthesis; L-histidine biosynthesis; L-histidine from 5-phospho-alpha-D-ribose 1-diphosphate: step 1/9. In terms of biological role, catalyzes the condensation of ATP and 5-phosphoribose 1-diphosphate to form N'-(5'-phosphoribosyl)-ATP (PR-ATP). Has a crucial role in the pathway because the rate of histidine biosynthesis seems to be controlled primarily by regulation of HisG enzymatic activity. This is ATP phosphoribosyltransferase from Bacillus licheniformis (strain ATCC 14580 / DSM 13 / JCM 2505 / CCUG 7422 / NBRC 12200 / NCIMB 9375 / NCTC 10341 / NRRL NRS-1264 / Gibson 46).